Reading from the N-terminus, the 281-residue chain is Cell division protein DivIB (281 aa).

Positions 1–36 are disordered; sequence MARKRITRRDPEEELSKFLRHEPGQGQETRKLSSQL. Over 1–46 the chain is Cytoplasmic; it reads MARKRITRRDPEEELSKFLRHEPGQGQETRKLSSQLTSLKKERRRG. The span at 8 to 31 shows a compositional bias: basic and acidic residues; sequence RRDPEEELSKFLRHEPGQGQETRK. Residues 47-69 traverse the membrane as a helical segment; that stretch reads LLTRLGSIMAVCLLAIAFLTYYV. At 70 to 281 the chain is on the extracellular side; the sequence is SPLADVSTVR…SAEKKAYGLS (212 aa). The POTRA domain maps to 73–144; sequence ADVSTVRVLG…NTLNMQVHER (72 aa).

The protein belongs to the FtsQ/DivIB family. DivIB subfamily.

Its subcellular location is the cell membrane. Functionally, cell division protein that may be involved in stabilizing or promoting the assembly of the division complex. This Lactobacillus delbrueckii subsp. bulgaricus (strain ATCC 11842 / DSM 20081 / BCRC 10696 / JCM 1002 / NBRC 13953 / NCIMB 11778 / NCTC 12712 / WDCM 00102 / Lb 14) protein is Cell division protein DivIB.